Reading from the N-terminus, the 308-residue chain is Aspartate carbamoyltransferase catalytic subunit (308 aa).

R59 and T60 together coordinate carbamoyl phosphate. Residue K87 participates in L-aspartate binding. Carbamoyl phosphate contacts are provided by R109, H139, and Q142. Positions 172 and 224 each coordinate L-aspartate. Carbamoyl phosphate contacts are provided by A265 and P266.

The protein belongs to the aspartate/ornithine carbamoyltransferase superfamily. ATCase family. As to quaternary structure, heterododecamer (2C3:3R2) of six catalytic PyrB chains organized as two trimers (C3), and six regulatory PyrI chains organized as three dimers (R2).

It catalyses the reaction carbamoyl phosphate + L-aspartate = N-carbamoyl-L-aspartate + phosphate + H(+). It functions in the pathway pyrimidine metabolism; UMP biosynthesis via de novo pathway; (S)-dihydroorotate from bicarbonate: step 2/3. In terms of biological role, catalyzes the condensation of carbamoyl phosphate and aspartate to form carbamoyl aspartate and inorganic phosphate, the committed step in the de novo pyrimidine nucleotide biosynthesis pathway. This is Aspartate carbamoyltransferase catalytic subunit from Streptococcus thermophilus (strain ATCC BAA-491 / LMD-9).